The sequence spans 422 residues: Killer cell immunoglobulin-like receptor 3DL1 (422 aa).

An N-terminal signal peptide occupies residues 1 to 21 (MMFEFLSLLCSGFFLVQRMSA). At 22–329 (HMGSYDKPFL…KNLHIQIGLL (308 aa)) the chain is on the extracellular side. Ig-like C2-type domains follow at residues 42 to 100 (GQNV…HHQY), 135 to 202 (GENV…YNHS), and 237 to 300 (EQNM…FKNS). N-linked (GlcNAc...) asparagine glycosylation is present at Asn-44. Cys-49 and Cys-95 are disulfide-bonded. The N-linked (GlcNAc...) asparagine glycan is linked to Asn-137. Cys-142 and Cys-195 are oxidised to a cystine. N-linked (GlcNAc...) asparagine glycosylation is found at Asn-200 and Asn-239. Cysteines 244 and 293 form a disulfide. An N-linked (GlcNAc...) asparagine glycan is attached at Asn-299. The helical transmembrane segment at 330 to 350 (VTMVLVIVVIIIIIIIIIIII) threads the bilayer. Over 351–422 (YYYYFSKKSS…DTVVYTEVMI (72 aa)) the chain is Cytoplasmic.

This sequence belongs to the immunoglobulin superfamily.

It is found in the cell membrane. Receptor on natural killer (NK) cells. Inhibits the activity of NK cells thus preventing cell lysis. This chain is Killer cell immunoglobulin-like receptor 3DL1 (Kir3dl1), found in Rattus norvegicus (Rat).